The following is a 448-amino-acid chain: Probable glycine dehydrogenase (decarboxylating) subunit 1 (448 aa).

The protein belongs to the GcvP family. N-terminal subunit subfamily. The glycine cleavage system is composed of four proteins: P, T, L and H. In this organism, the P 'protein' is a heterodimer of two subunits.

It catalyses the reaction N(6)-[(R)-lipoyl]-L-lysyl-[glycine-cleavage complex H protein] + glycine + H(+) = N(6)-[(R)-S(8)-aminomethyldihydrolipoyl]-L-lysyl-[glycine-cleavage complex H protein] + CO2. Functionally, the glycine cleavage system catalyzes the degradation of glycine. The P protein binds the alpha-amino group of glycine through its pyridoxal phosphate cofactor; CO(2) is released and the remaining methylamine moiety is then transferred to the lipoamide cofactor of the H protein. The polypeptide is Probable glycine dehydrogenase (decarboxylating) subunit 1 (Geobacillus sp. (strain WCH70)).